A 457-amino-acid polypeptide reads, in one-letter code: Multidrug resistance protein MdtK (457 aa).

Transmembrane regions (helical) follow at residues 11-31, 53-73, 93-113, 127-147, 160-180, 191-211, 243-263, 276-296, 316-336, 357-377, 387-407, and 418-438; these read LLALAIPVILAQVAQTAMGFV, IWLPAILFGHGLLLALTPVVA, WLAGFVSVLIMVVLWNAGYII, AVGYLRALLWGAPGYLFFQVA, GMVMGFIGLLVNIPVNYIFIY, VGCGVATASVYWVMFASMLWW, LPIALALFFEVTLFAVVALLV, IALNFSSLMFVLPLSLAAAVT, RTGVGVGVCLAVFTAIFTVLM, LMLLAAIYQISDSIQVIGSGI, IFFITFTAYWVLGLPSGYLLA, and PAGFWCGFIIGLTSAAIMMML.

The protein belongs to the multi antimicrobial extrusion (MATE) (TC 2.A.66.1) family. MdtK subfamily.

It is found in the cell inner membrane. Functionally, multidrug efflux pump that functions probably as a Na(+)/drug antiporter. This Klebsiella pneumoniae subsp. pneumoniae (strain ATCC 700721 / MGH 78578) protein is Multidrug resistance protein MdtK.